A 183-amino-acid chain; its full sequence is Ribulose bisphosphate carboxylase small subunit, chloroplastic 5 (183 aa).

Residues M1 to R42 constitute a chloroplast transit peptide.

The protein belongs to the RuBisCO small chain family. In terms of assembly, heterohexadecamer of 8 large and 8 small subunits.

Its subcellular location is the plastid. It localises to the chloroplast. In terms of biological role, ruBisCO catalyzes two reactions: the carboxylation of D-ribulose 1,5-bisphosphate, the primary event in carbon dioxide fixation, as well as the oxidative fragmentation of the pentose substrate. Both reactions occur simultaneously and in competition at the same active site. Although the small subunit is not catalytic it is essential for maximal activity. This chain is Ribulose bisphosphate carboxylase small subunit, chloroplastic 5, found in Acetabularia acetabulum (Mermaid's wine glass).